The primary structure comprises 260 residues: Hydroxyethylthiazole kinase (260 aa).

Met-49 is a binding site for substrate. ATP-binding residues include Arg-124 and Thr-170. Substrate is bound at residue Gly-197.

The protein belongs to the Thz kinase family. The cofactor is Mg(2+).

It catalyses the reaction 5-(2-hydroxyethyl)-4-methylthiazole + ATP = 4-methyl-5-(2-phosphooxyethyl)-thiazole + ADP + H(+). The protein operates within cofactor biosynthesis; thiamine diphosphate biosynthesis; 4-methyl-5-(2-phosphoethyl)-thiazole from 5-(2-hydroxyethyl)-4-methylthiazole: step 1/1. Functionally, catalyzes the phosphorylation of the hydroxyl group of 4-methyl-5-beta-hydroxyethylthiazole (THZ). The sequence is that of Hydroxyethylthiazole kinase from Yersinia enterocolitica serotype O:8 / biotype 1B (strain NCTC 13174 / 8081).